The chain runs to 246 residues: Cell division protein ZapD (246 aa).

The protein belongs to the ZapD family. As to quaternary structure, interacts with FtsZ.

The protein resides in the cytoplasm. In terms of biological role, cell division factor that enhances FtsZ-ring assembly. Directly interacts with FtsZ and promotes bundling of FtsZ protofilaments, with a reduction in FtsZ GTPase activity. The polypeptide is Cell division protein ZapD (Vibrio cholerae serotype O1 (strain ATCC 39541 / Classical Ogawa 395 / O395)).